Consider the following 143-residue polypeptide: Beta/delta-urticatoxin-Uf2a (143 aa).

Residues 1 to 18 (MGAIVLVALMALVASSSA) form the signal peptide. The propeptide occupies 19–80 (FSDIEHNIMK…MMLSGRPQPN (62 aa)). 6 cysteine pairs are disulfide-bonded: Cys83–Cys100, Cys90–Cys105, Cys99–Cys113, Cys115–Cys129, Cys122–Cys134, and Cys128–Cys142.

Belongs to the urticatoxin-2 family. In terms of tissue distribution, expressed in trichomes, that are stiff epidermal hairs located on the surface of petioles and leaves.

Its subcellular location is the secreted. In terms of biological role, plant defense neurotoxin that causes pain and systemic symptoms in mammals via modulation of voltage-gated sodium channels (Nav). Potent modulator of human Nav1.5/SCN5A (EC(50)=55 nM), Nav1.6/SCN8A (EC(50)=0.86 nM), and Nav1.7/SCN9A (EC(50)=208 nM), where it shifts the activation threshold to more negative potentials and delays fast inactivation. Also shifts the voltage-dependence of steady-state fast inactivation of Nav1.6/SCN8A, but not that of Nav1.5/SCN5A or Nav1.7/SCN9A. On Nav1.7/SCN9A, principally acts by binding to extracellular loops of domain IV (Nav site 3). Does not affect current response of the tetrodotoxin (TTX)-resistant Nav1.8/SCN10A sodium channel. In vivo, intraplantar injection into mice causes numerous dose-dependent, immediate, and long-lasting spontaneous pain behaviors, while no swelling is observed in the injected paw. At the highest doses tested, systemic symptoms including hypokinesia and hypersalivation are observed. The polypeptide is Beta/delta-urticatoxin-Uf2a (Urtica ferox (Tree nettle)).